A 125-amino-acid polypeptide reads, in one-letter code: uncharacterized protein (125 aa).

A run of 2 helical transmembrane segments spans residues 22-44 and 54-73; these read TPLM…NAAV and YMGI…SVLM.

This sequence belongs to the bacteriophage holin family. Cp-1 holin subfamily.

Its subcellular location is the cell membrane. This is an uncharacterized protein from Clostridium acetobutylicum (strain ATCC 824 / DSM 792 / JCM 1419 / IAM 19013 / LMG 5710 / NBRC 13948 / NRRL B-527 / VKM B-1787 / 2291 / W).